The sequence spans 294 residues: uncharacterized protein (294 aa).

2 disordered regions span residues 1–148 (MFLR…LEKP) and 268–294 (DEAATDWESEGLEREGEEQRGDPGKGL). A phosphoserine mark is found at serine 34 and serine 35. Positions 35 to 44 (SSENSGSDWD) are enriched in low complexity. Residues 52 to 62 (DVGHPKTKDSG) show a composition bias toward basic and acidic residues. A phosphoserine mark is found at serine 71 and serine 90. 2 stretches are compositionally biased toward basic and acidic residues: residues 73–92 (PSKEEPQVEQLGSKRMDSLK) and 278–294 (GLEREGEEQRGDPGKGL).

This is an uncharacterized protein from Homo sapiens (Human).